A 220-amino-acid chain; its full sequence is Iron-sulfur cluster repair protein YtfE (220 aa).

Belongs to the RIC family. YtfE subfamily. In terms of assembly, homodimer.

The protein resides in the cytoplasm. In terms of biological role, di-iron-containing protein involved in the repair of iron-sulfur clusters damaged by oxidative and nitrosative stress conditions. The chain is Iron-sulfur cluster repair protein YtfE from Escherichia coli (strain SMS-3-5 / SECEC).